We begin with the raw amino-acid sequence, 130 residues long: Arginine decarboxylase proenzyme (130 aa).

Catalysis depends on Ser78, which acts as the Schiff-base intermediate with substrate; via pyruvic acid. Ser78 is modified (pyruvic acid (Ser); by autocatalysis). Catalysis depends on His83, which acts as the Proton acceptor; for processing activity. The Proton donor; for catalytic activity role is filled by Cys98.

Belongs to the prokaryotic AdoMetDC family. Type 1 subfamily. In terms of assembly, heterooctamer of four alpha and four beta chains arranged as a tetramer of alpha/beta heterodimers. Pyruvate is required as a cofactor. Post-translationally, is synthesized initially as an inactive proenzyme. Formation of the active enzyme involves a self-maturation process in which the active site pyruvoyl group is generated from an internal serine residue via an autocatalytic post-translational modification. Two non-identical subunits are generated from the proenzyme in this reaction, and the pyruvate is formed at the N-terminus of the alpha chain, which is derived from the carboxyl end of the proenzyme. The post-translation cleavage follows an unusual pathway, termed non-hydrolytic serinolysis, in which the side chain hydroxyl group of the serine supplies its oxygen atom to form the C-terminus of the beta chain, while the remainder of the serine residue undergoes an oxidative deamination to produce ammonia and the pyruvoyl group blocking the N-terminus of the alpha chain.

It catalyses the reaction L-arginine + H(+) = agmatine + CO2. The protein operates within amine and polyamine biosynthesis; agmatine biosynthesis; agmatine from L-arginine: step 1/1. Its function is as follows. Specifically catalyzes the decarboxylation of L-arginine to agmatine. Has no S-adenosylmethionine decarboxylase (AdoMetDC) activity. The protein is Arginine decarboxylase proenzyme of Sulfolobus acidocaldarius (strain ATCC 33909 / DSM 639 / JCM 8929 / NBRC 15157 / NCIMB 11770).